The primary structure comprises 236 residues: DCN1-like protein 5 (236 aa).

Phosphoserine is present on residues S9, S40, and S47. A DCUN1 domain is found at 45–231 (FSSKKCLAWF…LLDEFVEWHK (187 aa)).

In terms of assembly, part of a complex that contains DCUN1D5, CUL1 and RBX1; this interaction is bridged by CUL1. Interacts (via the DCUN1 domain) with the unneddylated cullins: interacts with CUL1, CUL2, CUL3, CUL4A, CUL4B and CUL5; these interactions promote the cullin neddylation and the identity of the cullin dictates the affinity of the interaction. Interacts (via DCUN1 domain) with UBE2M (N-terminally acetylated form) and probably with UBE2F (N-terminally acetylated form). May also interact with regulators or subunits of cullin-RING ligases such as RBX1, RNF7, ELOB and DDB1; these interactions are bridged by cullins. Interacts with CAND1; this interaction is bridged by cullins and strongly inhibits the neddylation of cullins. These CAND-cullin-DCNL complexes can only be neddylated in the presence of a substrate adapter. Post-translationally, phosphorylation at Ser-40 is independent of cullin's interaction. Phosphorylated in response to both TICAM1 and MYD88 dependent Toll-like receptor (TLR) pathway activation. Phosphorylated in response to IL1B stimulation.

Its subcellular location is the nucleus. It is found in the cytoplasm. The protein localises to the cytoskeleton. It localises to the spindle. In terms of biological role, contributes to the neddylation of all cullins by transferring NEDD8 from N-terminally acetylated NEDD8-conjugating E2s enzyme to different cullin C-terminal domain-RBX complexes which is necessary for the activation of cullin-RING E3 ubiquitin ligases (CRLs). May play a role in DNA damage response and may participate in cell proliferation and anchorage-independent cell growth. In Bos taurus (Bovine), this protein is DCN1-like protein 5 (DCUN1D5).